A 394-amino-acid chain; its full sequence is Ornithine aminotransferase 1 (394 aa).

Lys252 is modified (N6-(pyridoxal phosphate)lysine).

It belongs to the class-III pyridoxal-phosphate-dependent aminotransferase family. OAT subfamily. Requires pyridoxal 5'-phosphate as cofactor.

It is found in the cytoplasm. It carries out the reaction a 2-oxocarboxylate + L-ornithine = L-glutamate 5-semialdehyde + an L-alpha-amino acid. The protein operates within amino-acid biosynthesis; L-proline biosynthesis; L-glutamate 5-semialdehyde from L-ornithine: step 1/1. Its function is as follows. Catalyzes the interconversion of ornithine to glutamate semialdehyde. The chain is Ornithine aminotransferase 1 from Staphylococcus aureus (strain Mu50 / ATCC 700699).